The sequence spans 1206 residues: Cilia- and flagella-associated protein 157 (1206 aa).

Disordered regions lie at residues 26–52 (GGGG…GRDL), 79–109 (RAEQ…QQAP), 125–173 (EATC…RGPL), and 327–405 (GSGK…EEDW). Low complexity-rich tracts occupy residues 88-109 (GRPQ…QQAP), 156-173 (AKAV…RGPL), and 385-397 (QQLG…QPGG). 3 coiled-coil regions span residues 634-732 (TDEL…KTKD), 799-833 (TEKL…LARR), and 876-903 (LHLA…KTAE). Disordered stretches follow at residues 936–990 (TTTN…DELS), 1011–1072 (LSHG…GATS), and 1168–1206 (PWGK…SLKV). 2 stretches are compositionally biased toward low complexity: residues 951-973 (AGAD…SSSA) and 1014-1035 (GPLS…ALAG). 2 stretches are compositionally biased toward gly residues: residues 1037–1046 (WGPGSPGGSR) and 1058–1067 (SAGGMGGPQG). 2 stretches are compositionally biased toward polar residues: residues 1175 to 1184 (QQPLTTTKHS) and 1193 to 1206 (GPSN…SLKV).

This sequence belongs to the CFAP157 family.

Its subcellular location is the cell projection. It localises to the cilium. It is found in the flagellum. The sequence is that of Cilia- and flagella-associated protein 157 from Chlamydomonas reinhardtii (Chlamydomonas smithii).